The following is a 584-amino-acid chain: Pentalenolactone D synthase (584 aa).

FAD is bound by residues 55-56, 77-78, 85-86, 97-98, Tyr-103, Val-147, and Met-486; these read IG, DG, TW, and DV.

The protein belongs to the FAD-binding monooxygenase family. FAD serves as cofactor.

It carries out the reaction 1-deoxy-11-oxopentalenate + NADPH + O2 + H(+) = pentalenolactone D + NADP(+) + H2O. It participates in antibiotic biosynthesis; pentalenolactone biosynthesis. Functionally, catalyzes the flavin-dependent Baeyer-Villiger oxidation of 1-deoxy-11-oxopentalenic acid to pentalenolactone D in the biosynthesis of pentalenolactone antibiotic. This is Pentalenolactone D synthase (penE) from Streptomyces exfoliatus (Streptomyces hydrogenans).